The following is a 25-amino-acid chain: Putative cytochrome c4 (25 aa).

A disordered region spans residues 1–25; it reads QEDIEAGKQKSATCTACHGQEGNST. 2 residues coordinate heme: Cys14 and Cys17.

In terms of processing, binds 2 heme groups per subunit.

It localises to the periplasm. In terms of biological role, diheme, high potential cytochrome c believed to be an intermediate electron donor to terminal oxidation systems. This Aliivibrio fischeri (Vibrio fischeri) protein is Putative cytochrome c4.